We begin with the raw amino-acid sequence, 288 residues long: Elongation factor Ts (288 aa).

Positions 82 to 85 (TDFV) are involved in Mg(2+) ion dislocation from EF-Tu.

The protein belongs to the EF-Ts family.

The protein localises to the cytoplasm. Its function is as follows. Associates with the EF-Tu.GDP complex and induces the exchange of GDP to GTP. It remains bound to the aminoacyl-tRNA.EF-Tu.GTP complex up to the GTP hydrolysis stage on the ribosome. This Prosthecochloris aestuarii (strain DSM 271 / SK 413) protein is Elongation factor Ts.